Consider the following 207-residue polypeptide: MNIKLDSVITERAAGLHAAAVIYENIEVGSSPQMLKGRLRLFQESLFFDYADGGISDESFVKEWQKLFKQLNPSFEGETTPMEDMLVPISKEQFMESKDSAHDTIDFFALKYSLPIMIYDAGKLHEPVRISLGEKENILLFSDENGIFGDFKNSVNHYPVSNETKNMLQIIFFPPSIEKSSAVNLLSSLTKMFEQIHGGTHTVHWLT.

This is an uncharacterized protein from Bacillus subtilis (strain 168).